Here is a 555-residue protein sequence, read N- to C-terminus: Disabled homolog 1 (555 aa).

The segment at 1 to 26 (MSTETELQVAVKTSAKKDSRKKGQDR) is disordered. Basic and acidic residues predominate over residues 15-26 (AKKDSRKKGQDR). Positions 36 to 189 (KGEGVRYKAK…CEQAVYQTIL (154 aa)) constitute a PID domain. Phosphotyrosine is present on residues Y198, Y220, and Y232. Disordered regions lie at residues 386–409 (PLATVPGTNDSARSSPQSDKPRQK) and 469–555 (LTPV…QDGS). Positions 391-403 (PGTNDSARSSPQS) are enriched in polar residues. Low complexity-rich tracts occupy residues 470–479 (TPVTSTTPST) and 490–501 (SSPSKSSASHVS). S491 bears the Phosphoserine; by CDK5 mark. Residues 504–513 (TADDIFEEGF) are compositionally biased toward acidic residues.

In terms of assembly, associates with the SH2 domains of SRC, FYN and ABL. Interacts (phosphorylated on tyrosine residues) with CRK and CRKL (via respective SH2 domain). Interacts with SIAH1, LRP8 and VLDLR. Interacts with LRP1. Interacts with APLP1 (via NPXY motif). Interacts with DAB2IP. Interacts with ZSWIM8. In terms of processing, phosphorylated by FYN on Tyr-198 and Tyr-220 upon reelin induction in embryonic neurons. Also phosphorylated on Ser-491 independently of reelin signaling. Ubiquitinated by various cullin-5-RING E3 ubiquitin-protein ligase complexes (ECS complexes) following ligand-binding and phosphorylation, leading to its degradation. Ubiquitinated by the ECS(SOCS7) complex in the cortical plate of the developing cerebral cortex following ligand-binding and phosphorylation by FYN, leading to its degradation by the proteasome. Recognized by ZSWIM8 through a disorder targets misorder mechanism that eliminates misfolded DAB1 via ubiquitination and proteasomal degradation.

The protein resides in the cytoplasm. Functionally, signaling adapter of the reelin-mediated signaling pathway, which regulates the migration and differentiation of postmitotic neurons during brain development. Mediates intracellular transduction of Reelin signaling following reelin (RELN)-binding to its receptor: acts by docking proteins through its phosphotyrosine residues and PID domain. This is Disabled homolog 1 (Dab1) from Rattus norvegicus (Rat).